The primary structure comprises 177 residues: uncharacterized protein (177 aa).

In terms of domain architecture, N-acetyltransferase spans 10 to 177 (LILRQITDQD…NVYSIVKPRE (168 aa)).

The protein belongs to the acetyltransferase family.

This is an uncharacterized protein from Bacillus subtilis (strain 168).